The primary structure comprises 180 residues: Adenine phosphoribosyltransferase (180 aa).

The residue at position 2 (alanine 2) is an N-acetylalanine. Residues serine 4, serine 15, and serine 30 each carry the phosphoserine modification. A Phosphotyrosine modification is found at tyrosine 60. Serine 66 is modified (phosphoserine). Lysine 114 is subject to N6-acetyllysine. At threonine 135 the chain carries Phosphothreonine.

Belongs to the purine/pyrimidine phosphoribosyltransferase family. Homodimer.

It localises to the cytoplasm. It carries out the reaction AMP + diphosphate = 5-phospho-alpha-D-ribose 1-diphosphate + adenine. Its pathway is purine metabolism; AMP biosynthesis via salvage pathway; AMP from adenine: step 1/1. Functionally, catalyzes a salvage reaction resulting in the formation of AMP, that is energically less costly than de novo synthesis. The chain is Adenine phosphoribosyltransferase from Homo sapiens (Human).